We begin with the raw amino-acid sequence, 82 residues long: Translation initiation factor IF-1, chloroplastic (82 aa).

Positions 1–72 constitute an S1-like domain; the sequence is MNKQNLIDVE…TKGRIIYRLR (72 aa).

This sequence belongs to the IF-1 family. Component of the 30S ribosomal translation pre-initiation complex which assembles on the 30S ribosome in the order IF-2 and IF-3, IF-1 and N-formylmethionyl-tRNA(fMet); mRNA recruitment can occur at any time during PIC assembly.

The protein localises to the plastid. The protein resides in the chloroplast. One of the essential components for the initiation of protein synthesis. Stabilizes the binding of IF-2 and IF-3 on the 30S subunit to which N-formylmethionyl-tRNA(fMet) subsequently binds. Helps modulate mRNA selection, yielding the 30S pre-initiation complex (PIC). Upon addition of the 50S ribosomal subunit IF-1, IF-2 and IF-3 are released leaving the mature 70S translation initiation complex. This chain is Translation initiation factor IF-1, chloroplastic, found in Cycas taitungensis (Prince sago).